A 201-amino-acid chain; its full sequence is Urease accessory protein UreG (201 aa).

Position 11–18 (11–18) interacts with GTP; it reads GPVGSGKT.

This sequence belongs to the SIMIBI class G3E GTPase family. UreG subfamily. Homodimer. UreD, UreF and UreG form a complex that acts as a GTP-hydrolysis-dependent molecular chaperone, activating the urease apoprotein by helping to assemble the nickel containing metallocenter of UreC. The UreE protein probably delivers the nickel.

It is found in the cytoplasm. Functionally, facilitates the functional incorporation of the urease nickel metallocenter. This process requires GTP hydrolysis, probably effectuated by UreG. The polypeptide is Urease accessory protein UreG (Synechococcus sp. (strain CC9605)).